Consider the following 60-residue polypeptide: Large ribosomal subunit protein uL30 (60 aa).

Belongs to the universal ribosomal protein uL30 family. In terms of assembly, part of the 50S ribosomal subunit.

This is Large ribosomal subunit protein uL30 from Nocardioides sp. (strain ATCC BAA-499 / JS614).